The sequence spans 184 residues: Large ribosomal subunit protein uL5 (184 aa).

It belongs to the universal ribosomal protein uL5 family. As to quaternary structure, part of the 50S ribosomal subunit; part of the 5S rRNA/L5/L18/L25 subcomplex. Contacts the 5S rRNA and the P site tRNA. Forms a bridge to the 30S subunit in the 70S ribosome.

This is one of the proteins that bind and probably mediate the attachment of the 5S RNA into the large ribosomal subunit, where it forms part of the central protuberance. In the 70S ribosome it contacts protein S13 of the 30S subunit (bridge B1b), connecting the 2 subunits; this bridge is implicated in subunit movement. Contacts the P site tRNA; the 5S rRNA and some of its associated proteins might help stabilize positioning of ribosome-bound tRNAs. The polypeptide is Large ribosomal subunit protein uL5 (Ureaplasma urealyticum serovar 10 (strain ATCC 33699 / Western)).